The following is a 188-amino-acid chain: Dual specificity protein phosphatase 18 (188 aa).

Positions G19–G160 constitute a Tyrosine-protein phosphatase domain. The sufficient for mitochondrial localization stretch occupies residues M95 to I141. C104 functions as the Phosphocysteine intermediate in the catalytic mechanism.

This sequence belongs to the protein-tyrosine phosphatase family. Non-receptor class dual specificity subfamily.

The protein localises to the cytoplasm. The protein resides in the nucleus. It is found in the mitochondrion inner membrane. The enzyme catalyses O-phospho-L-tyrosyl-[protein] + H2O = L-tyrosyl-[protein] + phosphate. It carries out the reaction O-phospho-L-seryl-[protein] + H2O = L-seryl-[protein] + phosphate. The catalysed reaction is O-phospho-L-threonyl-[protein] + H2O = L-threonyl-[protein] + phosphate. Functionally, can dephosphorylate single and diphosphorylated synthetic MAPK peptides, with preference for the phosphotyrosine and diphosphorylated forms over phosphothreonine. In vitro, dephosphorylates p-nitrophenyl phosphate (pNPP). The protein is Dual specificity protein phosphatase 18 (DUSP18) of Pongo abelii (Sumatran orangutan).